The chain runs to 393 residues: Chalcone synthase DIII (393 aa).

Cys-164 is an active-site residue.

Belongs to the thiolase-like superfamily. Chalcone/stilbene synthases family.

The catalysed reaction is (E)-4-coumaroyl-CoA + 3 malonyl-CoA + 3 H(+) = 2',4,4',6'-tetrahydroxychalcone + 3 CO2 + 4 CoA. The protein operates within secondary metabolite biosynthesis; flavonoid biosynthesis. Its function is as follows. The primary product of this enzyme is 4,2',4',6'-tetrahydroxychalcone (also termed naringenin-chalcone or chalcone) which can under specific conditions spontaneously isomerize into naringenin. The chain is Chalcone synthase DIII (CHS-DIII) from Ipomoea batatas (Sweet potato).